A 172-amino-acid chain; its full sequence is uncharacterized protein (172 aa).

4 helical membrane-spanning segments follow: residues 1-21, 41-61, 72-92, and 136-156; these read MLFINITFACILAIRFYSLSI, NSTLLSIAHVAFYFAAIIEAN, QIGLAILIFAIAMLFYVIYEL, and FCQAKYTALVGLPIYLLILAV.

The protein resides in the cell membrane. This is an uncharacterized protein from Haemophilus influenzae (strain ATCC 51907 / DSM 11121 / KW20 / Rd).